We begin with the raw amino-acid sequence, 261 residues long: Kallikrein 1-related peptidase b11 (261 aa).

The first 18 residues, 1-18, serve as a signal peptide directing secretion; sequence MWFLILFLALSLGGIDAA. Positions 19 to 24 are cleaved as a propeptide — activation peptide; that stretch reads PPVQSR. Residues 25–258 form the Peptidase S1 domain; that stretch reads IVGGFNCEKN…FTNWIKDTMA (234 aa). 5 cysteine pairs are disulfide-bonded: C31-C173, C50-C66, C152-C219, C184-C198, and C209-C234. H65 (charge relay system) is an active-site residue. N102 carries an N-linked (GlcNAc...) asparagine glycan. The active-site Charge relay system is the D120. Catalysis depends on S213, which acts as the Charge relay system.

It belongs to the peptidase S1 family. Kallikrein subfamily.

It carries out the reaction Preferential cleavage of Arg-|-Xaa bonds in small molecule substrates. Highly selective action to release kallidin (lysyl-bradykinin) from kininogen involves hydrolysis of Met-|-Xaa or Leu-|-Xaa.. Its function is as follows. Glandular kallikreins cleave Met-Lys and Arg-Ser bonds in kininogen to release Lys-bradykinin. The chain is Kallikrein 1-related peptidase b11 (Klk1b11) from Mus musculus (Mouse).